The chain runs to 1083 residues: MKVFDLLGPLPAPNTTTVLEASAGTGKTFALAGLVTRFVAEGVATLDQMLLITFGRAASQELRERVRAQIVAALVALDDPSRACNDLEEYLVKTDQQARRRRLRDALAGFDAATIATTHQFCQIVLKSLGVAGDSDAGVTLVESLDDLVSEIVDDLYLAHFGGQKDDPELSYPEALKLARVVVGNPATQLRPRDPDPDSPAAVRLKFARDVLAELEIRKRRRGVLGYDDLLTRLADALEPEDSPARVRMQQRWPIVMVDEFQDTDPVQWQVIERAFSGRSTLVLIGDPKQAIYAFRGGDIATYLRAAATAGDKQTLGTNWRSDRALVDRLQAVLRGAQLGGPDIVVHDVQARHQGHRLVGAPRNDPFRLRVVSRKPGNTRVIPIDQLRRHIGRDLAADISALLNSGATWCDQPVQAKDIAVITETHKDARACHAALLAAGIPAVYTGDSDVFTSEAAEDWLYLLEAFDQPHRPGLVRAAAATMFFGETAESLAAGGDALTDRVADTLREWAGHARERGVAAIFEAAQLAGMGKRVLSWQGGERLMTDLAHMTQLLQDTAHREGFGLAALRDWLRTQRSERGGESERNRRLDSDAAAVQIMTVWVSKGLQFPVVYLPFAFNRYVPEPDLVLFHDDGQRCLHVGGADPAVARAGRAEAAGDDSRLTYVALTRAQSQVVAWWAPSYDEPNGGLSRLMRGRAPGEAIVPDKCSPPKISDEDALERLRAWEAAGGPVIEESVIGAVSPVPPEPAPEDLAARKFFRAIDMAWKRTSYSGLLRAAETAGVGVSSEPEVTERDDEFDDIPVVAPAEGADVPSPMAHLPTGAAFGSLVHAVLETADPFAEDLTAELATHIDAHSQHWPVEVETAELAAALVPMHDTPLGPLAPGLTLRQIGLRDRLCELDFEFPMAGGDLRGGRFARLSDVGELLREYLPADDPLAVYAERLSTGILGVQPLRGYLSGSVDAVLRVGEKFVIVDYKTNWLGTGDGTLTAADYGRRRMVEAMLHSDYPLQALLYAVVLHRYLGWRLSGYDPATHLGGVLYLFVRGMCGAGTPVVDGHPAGVFSWEPPADLVVALSKLLDAEAP.

One can recognise a UvrD-like helicase ATP-binding domain in the interval 1-323 (MKVFDLLGPL…QTLGTNWRSD (323 aa)). The DNA-binding and helicase activity, interacts with RecC stretch occupies residues 1–704 (MKVFDLLGPL…RGRAPGEAIV (704 aa)). ATP is bound at residue 21–28 (ASAGTGKT). The region spanning 349–607 (VQARHQGHRL…QIMTVWVSKG (259 aa)) is the UvrD-like helicase C-terminal domain. A nuclease activity, interacts with RecD and RecA region spans residues 765 to 1083 (AWKRTSYSGL…LSKLLDAEAP (319 aa)). His830, Asp962, and Asp975 together coordinate Mg(2+). Asp975 (for nuclease activity) is an active-site residue.

The protein belongs to the helicase family. UvrD subfamily. In terms of assembly, heterotrimer of RecB, RecC and RecD. All subunits contribute to DNA-binding. Interacts with RecA. The cofactor is Mg(2+).

It carries out the reaction Exonucleolytic cleavage (in the presence of ATP) in either 5'- to 3'- or 3'- to 5'-direction to yield 5'-phosphooligonucleotides.. The catalysed reaction is Couples ATP hydrolysis with the unwinding of duplex DNA by translocating in the 3'-5' direction.. The enzyme catalyses ATP + H2O = ADP + phosphate + H(+). In terms of biological role, a helicase/nuclease that prepares dsDNA breaks (DSB) for recombinational DNA repair. Binds to DSBs and unwinds DNA via a highly rapid and processive ATP-dependent bidirectional helicase activity. Holoenzyme degrades any linearized DNA that is unable to undergo homologous recombination. In the holoenzyme this subunit contributes DNA-dependent ATPase activity, exonuclease activity and 3'-5' helicase activity. Unlike the case in E.coli, suppresses RecA-dependent homologous recombination, is instead required for single-strand annealing pathway repair of DSB. The sequence is that of RecBCD enzyme subunit RecB from Mycolicibacterium smegmatis (strain ATCC 700084 / mc(2)155) (Mycobacterium smegmatis).